The sequence spans 110 residues: MQSIAKLRAARISAQKARLVADQIRGKHVNDAVEILTFSQKKAAAIILKVLNSAIANAENNEGADIDELHVAEIQVGEGMTMKRFRARAKGRGNRICKRTSNIFVRVQER.

Belongs to the universal ribosomal protein uL22 family. As to quaternary structure, part of the 50S ribosomal subunit.

This protein binds specifically to 23S rRNA; its binding is stimulated by other ribosomal proteins, e.g. L4, L17, and L20. It is important during the early stages of 50S assembly. It makes multiple contacts with different domains of the 23S rRNA in the assembled 50S subunit and ribosome. In terms of biological role, the globular domain of the protein is located near the polypeptide exit tunnel on the outside of the subunit, while an extended beta-hairpin is found that lines the wall of the exit tunnel in the center of the 70S ribosome. This chain is Large ribosomal subunit protein uL22, found in Dichelobacter nodosus (strain VCS1703A).